A 337-amino-acid polypeptide reads, in one-letter code: Ribosomal RNA small subunit methyltransferase C (337 aa).

Belongs to the methyltransferase superfamily. RsmC family. Monomer.

It localises to the cytoplasm. The enzyme catalyses guanosine(1207) in 16S rRNA + S-adenosyl-L-methionine = N(2)-methylguanosine(1207) in 16S rRNA + S-adenosyl-L-homocysteine + H(+). In terms of biological role, specifically methylates the guanine in position 1207 of 16S rRNA in the 30S particle. The chain is Ribosomal RNA small subunit methyltransferase C from Proteus mirabilis (strain HI4320).